The primary structure comprises 91 residues: Small ribosomal subunit protein uS15c (91 aa).

The protein belongs to the universal ribosomal protein uS15 family. In terms of assembly, part of the 30S ribosomal subunit.

It is found in the plastid. The protein resides in the chloroplast. In Eucalyptus globulus subsp. globulus (Tasmanian blue gum), this protein is Small ribosomal subunit protein uS15c (rps15).